We begin with the raw amino-acid sequence, 438 residues long: Adenosylhomocysteinase (438 aa).

Residues Thr-64, Asp-139, and Glu-164 each coordinate substrate. An NAD(+)-binding site is contributed by 165–167; it reads TTT. Residues Lys-194 and Asp-198 each coordinate substrate. Residues Asn-199, 228–233, Glu-251, Asn-286, 307–309, and Asn-352 contribute to the NAD(+) site; these read GYGDVG and IGH.

This sequence belongs to the adenosylhomocysteinase family. The cofactor is NAD(+).

It localises to the cytoplasm. The catalysed reaction is S-adenosyl-L-homocysteine + H2O = L-homocysteine + adenosine. Its pathway is amino-acid biosynthesis; L-homocysteine biosynthesis; L-homocysteine from S-adenosyl-L-homocysteine: step 1/1. In terms of biological role, may play a key role in the regulation of the intracellular concentration of adenosylhomocysteine. In Coxiella burnetii (strain RSA 493 / Nine Mile phase I), this protein is Adenosylhomocysteinase.